We begin with the raw amino-acid sequence, 519 residues long: Importin subunit alpha-5 (519 aa).

Residues 1-58 (MSLRPSTKTEIRRIRYKVSVDAEEGRRRREDFLVEIRKSKRNENLMKKRRVKVLPPDY) form the IBB domain. ARM repeat units lie at residues 103–143 (SPPT…NIAS), 146–185 (SEHTKVVIDHGVVPLFVQLLASPDDDVREQAIWGLGNVAG), 188–228 (IQCR…NFFR), 230–269 (KPSPPFDLVKHVLPVLKRLVYSDDEQVLIDACWALSNLSD), 272–311 (NENIQSVIEAGVVPRLVELLQHASPVVLVPALRCIGNIVS), 314–354 (SQQT…NITA), 357–396 (EEQIQSVIDANLIPSLVNLAQHAEFDIKKEAIWAISNASV), and 400–439 (PNQIKYLVEQNCIKALCDILVCPDLRIILVSLGGLEMILI).

Belongs to the importin alpha family. In terms of assembly, forms a complex with importin subunit beta-1.

It localises to the nucleus envelope. Binds to conventional NLS motifs and mediates nuclear protein import across the nuclear envelope. The polypeptide is Importin subunit alpha-5 (Arabidopsis thaliana (Mouse-ear cress)).